The following is a 116-amino-acid chain: MKDKKVARLRRAKRTRLKIRELGEVRLCVHRTPRHIYAQVISAAGDQVLASASTVEKDLRADATGNADAATKVGQIIAQRAKEAGIERVAFDRSGFKYHGRVKALADAARENGLEF.

Belongs to the universal ribosomal protein uL18 family. Part of the 50S ribosomal subunit; part of the 5S rRNA/L5/L18/L25 subcomplex. Contacts the 5S and 23S rRNAs.

In terms of biological role, this is one of the proteins that bind and probably mediate the attachment of the 5S RNA into the large ribosomal subunit, where it forms part of the central protuberance. The sequence is that of Large ribosomal subunit protein uL18 from Alcanivorax borkumensis (strain ATCC 700651 / DSM 11573 / NCIMB 13689 / SK2).